The primary structure comprises 668 residues: Fe(2+) transporter FeoB (668 aa).

Residues 3–165 form the FeoB-type G domain; the sequence is SYEIALIGNP…KKAISIAVKD (163 aa). Residue 10 to 17 participates in GTP binding; sequence GNPNVGKS. Mg(2+) contacts are provided by N21, A22, T24, and G25. GTP contacts are provided by residues 35 to 39, 56 to 59, 116 to 119, and 145 to 147; these read GVTVE, DLPG, NKMD, and SAA. 8 consecutive transmembrane segments (helical) span residues 344–364, 386–406, 418–438, 450–470, 515–535, 574–594, 613–633, and 643–663; these read VGAVLVFFPILAFLFFAISFL, LPGKAVISMVMGFGCNVPAIM, ILTILINPLLSCSARLPIYAL, VVILSMYALGVVLALITAFLF, IIVFGVILVWVLSVYGPSGYL, ALVFGIIAKEVVVGSLAMLYG, AYAFMAFSLIYLPCIATLAVI, and LFAVTYEMILAYVVALVISVI.

It belongs to the TRAFAC class TrmE-Era-EngA-EngB-Septin-like GTPase superfamily. FeoB GTPase (TC 9.A.8) family. As to quaternary structure, the crystallized N-terminal domain is a homodimer.

The protein localises to the cell membrane. In terms of biological role, probable transporter of a GTP-driven Fe(2+) uptake system, might be able to transport Fe(2+) into or out of the cell. This Methanocaldococcus jannaschii (strain ATCC 43067 / DSM 2661 / JAL-1 / JCM 10045 / NBRC 100440) (Methanococcus jannaschii) protein is Fe(2+) transporter FeoB.